The sequence spans 530 residues: CTP synthase (530 aa).

The interval 1-267 is amidoligase domain; it reads MTKYVFVTGG…DDFVLNHFKM (267 aa). Serine 13 contributes to the CTP binding site. Serine 13 serves as a coordination point for UTP. 14-19 lines the ATP pocket; sequence SLGKGI. Position 54 (tyrosine 54) interacts with L-glutamine. Residue aspartate 71 participates in ATP binding. The Mg(2+) site is built by aspartate 71 and glutamate 141. CTP-binding positions include 148 to 150, 188 to 193, and lysine 224; these read DIE and KTKPTQ. UTP contacts are provided by residues 188–193 and lysine 224; that span reads KTKPTQ. Residue 240–242 coordinates ATP; it reads RDA. Residues 292-530 enclose the Glutamine amidotransferase type-1 domain; the sequence is KIALVGKYIE…LFKAFIGATM (239 aa). Position 354 (glycine 354) interacts with L-glutamine. Cysteine 381 serves as the catalytic Nucleophile; for glutamine hydrolysis. L-glutamine is bound by residues 382-385, glutamate 405, and arginine 463; that span reads LGMQ. Residues histidine 508 and glutamate 510 contribute to the active site.

It belongs to the CTP synthase family. Homotetramer.

It catalyses the reaction UTP + L-glutamine + ATP + H2O = CTP + L-glutamate + ADP + phosphate + 2 H(+). It carries out the reaction L-glutamine + H2O = L-glutamate + NH4(+). The enzyme catalyses UTP + NH4(+) + ATP = CTP + ADP + phosphate + 2 H(+). It functions in the pathway pyrimidine metabolism; CTP biosynthesis via de novo pathway; CTP from UDP: step 2/2. With respect to regulation, allosterically activated by GTP, when glutamine is the substrate; GTP has no effect on the reaction when ammonia is the substrate. The allosteric effector GTP functions by stabilizing the protein conformation that binds the tetrahedral intermediate(s) formed during glutamine hydrolysis. Inhibited by the product CTP, via allosteric rather than competitive inhibition. Catalyzes the ATP-dependent amination of UTP to CTP with either L-glutamine or ammonia as the source of nitrogen. Regulates intracellular CTP levels through interactions with the four ribonucleotide triphosphates. This is CTP synthase from Latilactobacillus sakei subsp. sakei (strain 23K) (Lactobacillus sakei subsp. sakei).